The primary structure comprises 249 residues: 5'-nucleotidase SurE (249 aa).

A divalent metal cation contacts are provided by aspartate 9, aspartate 10, serine 40, and asparagine 92.

This sequence belongs to the SurE nucleotidase family. The cofactor is a divalent metal cation.

It is found in the cytoplasm. The catalysed reaction is a ribonucleoside 5'-phosphate + H2O = a ribonucleoside + phosphate. In terms of biological role, nucleotidase that shows phosphatase activity on nucleoside 5'-monophosphates. The protein is 5'-nucleotidase SurE of Shewanella loihica (strain ATCC BAA-1088 / PV-4).